A 117-amino-acid chain; its full sequence is MLLEKAYRIKKNADFQRIYKKGHSVANRQFVVYTCNNKEIDHFRLGISVSKKLGNAVLRNKIKRAIRENFKVHKSHILAKDIIVIARQPAKDMTTLQIQNSLEHVLKIAKVFNKKIK.

This sequence belongs to the RnpA family. In terms of assembly, consists of a catalytic RNA component (M1 or rnpB) and a protein subunit.

The enzyme catalyses Endonucleolytic cleavage of RNA, removing 5'-extranucleotides from tRNA precursor.. RNaseP catalyzes the removal of the 5'-leader sequence from pre-tRNA to produce the mature 5'-terminus. It can also cleave other RNA substrates such as 4.5S RNA. The protein component plays an auxiliary but essential role in vivo by binding to the 5'-leader sequence and broadening the substrate specificity of the ribozyme. The sequence is that of Ribonuclease P protein component from Staphylococcus aureus (strain MW2).